The primary structure comprises 346 residues: Heat-inducible transcription repressor HrcA (346 aa).

This sequence belongs to the HrcA family.

Functionally, negative regulator of class I heat shock genes (grpE-dnaK-dnaJ and groELS operons). Prevents heat-shock induction of these operons. In Fructilactobacillus sanfranciscensis (Lactobacillus sanfranciscensis), this protein is Heat-inducible transcription repressor HrcA.